The sequence spans 322 residues: MEKNKLDQLKSMTTIVIDTGDIEAIKEYSPTDATTNPSLILSAVEKPAYKPLMEEAYHYSQKAKSSGEQISLFLDKLFVNVGCEILKLIPGRVSTEVDARLSFDVEGSIQKAQSLIALYKEMGIEKERILIKLASTWEGGLAAKQLEKMGIHCNMTLLFSMPQAIHCAEAQATLISPFVGRILDWYKKHDNVPGYAPAEDPGVKSVTTIYHYFKKFSYKTQIMGASFRNKEEILELAGCDLLTISPHFLQELHDASGNVEQKLDAAKSKQLNIEPIKMNEKAFRLALNDDAMATEKLSEGIRNFAKDAQKLEKMLRTTYKIG.

Lys-132 serves as the catalytic Schiff-base intermediate with substrate.

The protein belongs to the transaldolase family. Type 1 subfamily. In terms of assembly, homodimer.

The protein localises to the cytoplasm. The enzyme catalyses D-sedoheptulose 7-phosphate + D-glyceraldehyde 3-phosphate = D-erythrose 4-phosphate + beta-D-fructose 6-phosphate. It functions in the pathway carbohydrate degradation; pentose phosphate pathway; D-glyceraldehyde 3-phosphate and beta-D-fructose 6-phosphate from D-ribose 5-phosphate and D-xylulose 5-phosphate (non-oxidative stage): step 2/3. Its function is as follows. Transaldolase is important for the balance of metabolites in the pentose-phosphate pathway. This chain is Transaldolase, found in Protochlamydia amoebophila (strain UWE25).